Reading from the N-terminus, the 343-residue chain is Uroporphyrinogen decarboxylase (343 aa).

Substrate is bound by residues 23-27, D73, Y150, S205, and H322; that span reads RQAGR.

This sequence belongs to the uroporphyrinogen decarboxylase family. Homodimer.

Its subcellular location is the cytoplasm. It carries out the reaction uroporphyrinogen III + 4 H(+) = coproporphyrinogen III + 4 CO2. It participates in porphyrin-containing compound metabolism; protoporphyrin-IX biosynthesis; coproporphyrinogen-III from 5-aminolevulinate: step 4/4. Catalyzes the decarboxylation of four acetate groups of uroporphyrinogen-III to yield coproporphyrinogen-III. This is Uroporphyrinogen decarboxylase from Cereibacter sphaeroides (strain ATCC 17025 / ATH 2.4.3) (Rhodobacter sphaeroides).